The sequence spans 255 residues: Proteasome subunit alpha 2 (255 aa).

A disordered region spans residues A229–S255. Over residues P238 to A249 the composition is skewed to low complexity.

This sequence belongs to the peptidase T1A family. In terms of assembly, the 20S proteasome core is composed of 14 alpha and 14 beta subunits that assemble into four stacked heptameric rings, resulting in a barrel-shaped structure. The two inner rings, each composed of seven catalytic beta subunits, are sandwiched by two outer rings, each composed of seven alpha subunits. All four combinations of alpha- and beta-subunits (beta2-alpha1, beta2-alpha2, beta1-alpha2 and beta1-alpha1) yield fully assembled and proteolytically active proteasomes. The catalytic chamber with the active sites is on the inside of the barrel. Has probably a gated structure, the ends of the cylinder being occluded by the N-termini of the alpha-subunits. Is likely capped by the proteasome-associated ATPase, ARC. Post-translationally, the N-terminus is blocked.

The protein resides in the cytoplasm. It functions in the pathway protein degradation; proteasomal Pup-dependent pathway. Its activity is regulated as follows. The formation of the proteasomal ATPase ARC-20S proteasome complex, likely via the docking of the C-termini of ARC into the intersubunit pockets in the alpha-rings, may trigger opening of the gate for substrate entry. Interconversion between the open-gate and close-gate conformations leads to a dynamic regulation of the 20S proteasome proteolysis activity. Component of the proteasome core, a large protease complex with broad specificity involved in protein degradation. The R.erythropolis proteasomes are able to cleave oligopeptides after Tyr, Phe and Leu, very poorly after Arg but not after Glu. Thus, displays chymotrypsin-like activity, low trypsin-like activity but no caspase-like activity. The sequence is that of Proteasome subunit alpha 2 from Rhodococcus erythropolis (Arthrobacter picolinophilus).